The sequence spans 63 residues: Large ribosomal subunit protein uL29 (63 aa).

It belongs to the universal ribosomal protein uL29 family.

The protein is Large ribosomal subunit protein uL29 of Klebsiella pneumoniae (strain 342).